Reading from the N-terminus, the 619-residue chain is Manganese lipoxygenase (619 aa).

Positions 1–16 are cleaved as a signal peptide; that stretch reads MRVLVWIAGLAPLAVA. Asn-32, Asn-42, Asn-62, Asn-86, Asn-164, and Asn-229 each carry an N-linked (GlcNAc...) asparagine glycan. Residues 55-619 form the Lipoxygenase domain; sequence TLPCEDGNST…PGNIPFYLSV (565 aa). 4 residues coordinate Mn(2+): His-298, His-303, His-483, and Asn-487. Asn-515 and Asn-549 each carry an N-linked (GlcNAc...) asparagine glycan. Val-619 provides a ligand contact to Mn(2+).

The protein belongs to the lipoxygenase family. Manganese lipoxygenase subfamily. Requires Mn(2+) as cofactor.

It is found in the secreted. It carries out the reaction (9Z,12Z)-octadecadienoate + O2 = (9S)-hydroperoxy-(10E,12Z)-octadecadienoate. The enzyme catalyses (9Z,12Z)-octadecadienoate + O2 = (11S)-hydroperoxy-(9Z,12Z)-octadecadienoate. The catalysed reaction is (9Z,12Z)-octadecadienoate + O2 = (13R)-hydroperoxy-(9Z,11E)-octadecadienoate. It catalyses the reaction (9Z,12Z,15Z)-octadecatrienoate + O2 = (9S)-hydroperoxy-(10E,12Z,15Z)-octadecatrienoate. It carries out the reaction (9Z,12Z,15Z)-octadecatrienoate + O2 = (11R)-hydroperoxy-(9Z,12Z,15Z)-octadecatrienoate. The enzyme catalyses (9Z,12Z,15Z)-octadecatrienoate + O2 = (13R)-hydroperoxy-(9Z,11E,15Z)-octadecatrienoate. The catalysed reaction is (9S)-hydroperoxy-(10E,12Z,15Z)-octadecatrienoate + O2 = (9S,16S)-dihydroperoxy-(10E,12Z,14E)-octadecatrienoate. Its function is as follows. Lipoxygenase that metabolizes linoleic and alpha-linolenic acids to 9S-, 11- and 13R-hydroperoxy fatty acids. At the end of lipoxygenation, the intermediate product 11S-HPODE from linoleic acid is then transformed into 9S-HPODE and 13R-HPODE as the final products. The intermediate product 11R-HPOTrE from alpha-linolenic acid is transformed into 9S-HPOTrE and 13R-HPOTrE as the final products. 9S-HPOTrE is further oxidized by the enzyme to 9S,16S-DiHPOTrE as the end product. The protein is Manganese lipoxygenase of Pyricularia oryzae (strain 70-15 / ATCC MYA-4617 / FGSC 8958) (Rice blast fungus).